The following is a 386-amino-acid chain: Aspergillopepsin-1 (386 aa).

The N-terminal stretch at 1–20 (MVVFSKVAAAAFGLSAVASA) is a signal peptide. The propeptide at 21–69 (MPAAPPRQGFTINQLTRAIPKRTINLPAIYANALSKYGGNVPPHIQDAM) is activation peptide. In terms of domain architecture, Peptidase A1 spans 85–383 (YLTPVAVGGT…DSEGPQLGFA (299 aa)). Aspartate 101 is an active-site residue. An N-linked (GlcNAc...) asparagine glycan is attached at asparagine 130. Residue aspartate 275 is part of the active site. Cysteine 311 and cysteine 346 are disulfide-bonded.

This sequence belongs to the peptidase A1 family. In terms of assembly, monomer.

It is found in the secreted. The enzyme catalyses Hydrolysis of proteins with broad specificity. Generally favors hydrophobic residues in P1 and P1', but also accepts Lys in P1, which leads to activation of trypsinogen. Does not clot milk.. Secreted aspartic endopeptidase that allows assimilation of proteinaceous substrates. The scissile peptide bond is attacked by a nucleophilic water molecule activated by two aspartic residues in the active site. Shows a broad primary substrate specificity. Favors hydrophobic residues at the P1 and P1' positions, but also accepts a lysine residue in the P1 position, leading to the activation of trypsinogen and chymotrypsinogen A. In Emericella nidulans (strain FGSC A4 / ATCC 38163 / CBS 112.46 / NRRL 194 / M139) (Aspergillus nidulans), this protein is Aspergillopepsin-1.